A 394-amino-acid chain; its full sequence is Elongation factor Tu 1 (394 aa).

Positions 10–204 (KPHVNVGTIG…ALDTYIPEPE (195 aa)) constitute a tr-type G domain. Residues 19-26 (GHVDHGKT) form a G1 region. 19 to 26 (GHVDHGKT) serves as a coordination point for GTP. Residue threonine 26 participates in Mg(2+) binding. The segment at 60–64 (GITIS) is G2. Residues 81-84 (DCPG) form a G3 region. Residues 81 to 85 (DCPGH) and 136 to 139 (NKCD) each bind GTP. Residues 136–139 (NKCD) are G4. Residues 174–176 (SAL) form a G5 region.

Belongs to the TRAFAC class translation factor GTPase superfamily. Classic translation factor GTPase family. EF-Tu/EF-1A subfamily. As to quaternary structure, monomer.

It localises to the cytoplasm. The catalysed reaction is GTP + H2O = GDP + phosphate + H(+). In terms of biological role, GTP hydrolase that promotes the GTP-dependent binding of aminoacyl-tRNA to the A-site of ribosomes during protein biosynthesis. In Vibrio vulnificus (strain CMCP6), this protein is Elongation factor Tu 1.